Here is a 243-residue protein sequence, read N- to C-terminus: Transmembrane protein 174 (243 aa).

The next 2 membrane-spanning stretches (helical) occupy residues 40–60 (LLFS…MGWI) and 73–93 (LLGP…VCKF).

Interacts with SLC34A1; regulates SLC34A1 internalization by PTH and FGF23. As to expression, predominantly expressed in kidney. Selectively localized in the apical membrane of renal proximal tubule epithelial cells.

Its subcellular location is the endoplasmic reticulum membrane. It localises to the apical cell membrane. In terms of biological role, regulator of plasma phosphate homeostasis. Decreases serum inorganic phosphate (Pi) uptake by regulating the sodium-phosphate cotransporter SLC34A1 trafficking by PTH and FGF23 in the kidney. The sequence is that of Transmembrane protein 174 (TMEM174) from Homo sapiens (Human).